The chain runs to 224 residues: N-terminal Xaa-Pro-Lys N-methyltransferase 1-A (224 aa).

S-adenosyl-L-methionine contacts are provided by residues glycine 70, arginine 75, 92 to 94 (DVT), 120 to 121 (LQ), and glutamine 136.

It belongs to the methyltransferase superfamily. NTM1 family.

The protein localises to the nucleus. The catalysed reaction is N-terminal L-alanyl-L-prolyl-L-lysyl-[protein] + 3 S-adenosyl-L-methionine = N-terminal N,N,N-trimethyl-L-alanyl-L-prolyl-L-lysyl-[protein] + 3 S-adenosyl-L-homocysteine + 3 H(+). The enzyme catalyses N-terminal L-seryl-L-prolyl-L-lysyl-[protein] + 3 S-adenosyl-L-methionine = N-terminal N,N,N-trimethyl-L-seryl-L-prolyl-L-lysyl-[protein] + 3 S-adenosyl-L-homocysteine + 3 H(+). It catalyses the reaction N-terminal L-prolyl-L-prolyl-L-lysyl-[protein] + 2 S-adenosyl-L-methionine = N-terminal N,N-dimethyl-L-prolyl-L-prolyl-L-lysyl-[protein] + 2 S-adenosyl-L-homocysteine + 2 H(+). Its function is as follows. Distributive alpha-N-methyltransferase that methylates the N-terminus of target proteins containing the N-terminal motif [Ala/Gly/Pro/Ser]-Pro-Lys when the initiator Met is cleaved. Specifically catalyzes mono-, di- or tri-methylation of the exposed alpha-amino group of the Ala, Gly or Ser residue in the [Ala/Gly/Ser]-Pro-Lys motif and mono- or di-methylation of Pro in the Pro-Pro-Lys motif. Required during mitosis for normal bipolar spindle formation and chromosome segregation via its action on target proteins. The protein is N-terminal Xaa-Pro-Lys N-methyltransferase 1-A (ntmt1-a) of Xenopus laevis (African clawed frog).